The chain runs to 399 residues: Centrosomal protein 43 (399 aa).

The LisH domain occupies 70–102 (DGRLVASLVAEFLQFFNLDFTLAVFHPETSTIQ). Disordered stretches follow at residues 142 to 216 (PASV…SKSS) and 236 to 311 (DARD…KRGS). A phosphoserine mark is found at S152 and S160. The segment covering 163 to 172 (GKSSANSTPS) has biased composition (polar residues). T170 carries the phosphothreonine modification. Positions 175 to 186 (PRYKGQGKKKTI) are enriched in basic residues. Positions 197–216 (SETSQSEPSVSLSESKSKSS) are enriched in low complexity. S202 is modified (phosphoserine). A compositionally biased stretch (acidic residues) spans 246 to 256 (DGDDVEGDSFF). Over residues 259–275 (PIPKPEKTYGWRAEPRK) the composition is skewed to basic and acidic residues. Low complexity predominate over residues 290–302 (RSGLSSLAGAPSL). Phosphoserine occurs at positions 301 and 326. The tract at residues 328-354 (GLGTGEDEDYADDFNSASHRSEKSELS) is disordered. Y337 is subject to Phosphotyrosine.

It belongs to the CEP43 family. Homodimer. Part of a ternary complex that contains CEP350, CEP43 and MAPRE1. Interacts directly with CEP350 and MAPRE1. Interacts with CEP19. Interacts (via N-terminus) with CEP350 (via C-terminus).

It localises to the cytoplasm. The protein resides in the cytoskeleton. The protein localises to the microtubule organizing center. Its subcellular location is the centrosome. It is found in the centriole. It localises to the cilium basal body. In terms of biological role, required for anchoring microtubules to the centrosomes. Required for ciliation. The protein is Centrosomal protein 43 of Mus musculus (Mouse).